The following is a 1139-amino-acid chain: Exportin-T (1139 aa).

The disordered stretch occupies residues 562–589 (ARNKLRAAQGSGRTTPSSSDNVDLGPSS). Polar residues predominate over residues 572-589 (SGRTTPSSSDNVDLGPSS).

This sequence belongs to the exportin family.

It localises to the nucleus. The protein resides in the cytoplasm. TRNA nucleus export receptor which facilitates tRNA translocation across the nuclear pore complex. Involved in pre-tRNA splicing, probably by affecting the interaction of pre-tRNA with splicing endonuclease. The chain is Exportin-T (LOS1) from Cryptococcus neoformans var. neoformans serotype D (strain B-3501A) (Filobasidiella neoformans).